Consider the following 411-residue polypeptide: Bifunctional protein GlmU (411 aa).

The interval 1–204 is pyrophosphorylase; that stretch reads MDAIILCAGK…NGKLHGIELN (204 aa). UTP is bound by residues 6–9, glutamine 74, and glycine 79; that span reads LCAG. Positions 80, 130, 142, and 158 each coordinate N-acetyl-alpha-D-glucosamine 1-phosphate. Positions 205–224 are linker; sequence GYWNDIGHPWDVLSANNRFL. The segment at 225–411 is N-acetyltransferase; the sequence is NKIISKVSGK…DELVITKKRN (187 aa). Histidine 308 (proton acceptor) is an active-site residue. Residues alanine 384 and lysine 401 each contribute to the acetyl-CoA site.

The protein in the N-terminal section; belongs to the N-acetylglucosamine-1-phosphate uridyltransferase family. It in the C-terminal section; belongs to the transferase hexapeptide repeat family.

It catalyses the reaction N-acetyl-alpha-D-glucosamine 1-phosphate + UTP + H(+) = UDP-N-acetyl-alpha-D-glucosamine + diphosphate. It carries out the reaction alpha-D-glucosamine 1-phosphate + acetyl-CoA = N-acetyl-alpha-D-glucosamine 1-phosphate + CoA + H(+). The protein operates within nucleotide-sugar biosynthesis; UDP-N-acetyl-alpha-D-glucosamine biosynthesis; N-acetyl-alpha-D-glucosamine 1-phosphate from alpha-D-glucosamine 6-phosphate (route II): step 2/2. Its pathway is nucleotide-sugar biosynthesis; UDP-N-acetyl-alpha-D-glucosamine biosynthesis; UDP-N-acetyl-alpha-D-glucosamine from N-acetyl-alpha-D-glucosamine 1-phosphate: step 1/1. Its function is as follows. Catalyzes the last two sequential reactions in the de novo biosynthetic pathway for UDP-N-acetyl-glucosamine (UDP-GlcNAc). Responsible for the acetylation of GlcN-1-P to GlcNAc-1-P, and for the uridyl transfer from UTP to GlcNAc-1-P, to produce UDP-GlcNAc and pyrophosphate. This chain is Bifunctional protein GlmU, found in Methanococcus maripaludis (strain C7 / ATCC BAA-1331).